The sequence spans 928 residues: Zinc metalloproteinase nas-39 (928 aa).

Residues 1–30 form the signal peptide; that stretch reads MRFSANIAIIVNIIFLFIVVEFVLPTFIRS. One can recognise a Peptidase M12A domain in the interval 48–247; that stretch reads AATAKKERIW…RQTKKLYKCA (200 aa). N-linked (GlcNAc...) asparagine glycosylation is found at asparagine 69 and asparagine 87. 4 disulfide bridges follow: cysteine 90-cysteine 246, cysteine 111-cysteine 133, cysteine 113-cysteine 114, and cysteine 249-cysteine 268. Residue histidine 141 coordinates Zn(2+). Glutamate 142 is an active-site residue. Positions 145 and 151 each coordinate Zn(2+). 2 CUB domains span residues 249–359 and 360–476; these read CGGT…YAIC and GGPI…FTKE. N-linked (GlcNAc...) asparagine glycosylation occurs at asparagine 283. 6 disulfide bridges follow: cysteine 359–cysteine 385, cysteine 412–cysteine 439, cysteine 480–cysteine 491, cysteine 487–cysteine 500, cysteine 502–cysteine 515, and cysteine 519–cysteine 545. Residues 477 to 516 enclose the EGF-like 1; calcium-binding domain; it reads LNECATDKNICHHYCVNTVGGFKCACRVGYSLSSNGFSCD. The CUB 3 domain maps to 519-625; it reads CGGYLKASNG…DGFFANFIAD (107 aa). 2 N-linked (GlcNAc...) asparagine glycosylation sites follow: asparagine 527 and asparagine 560. 8 disulfide bridges follow: cysteine 573/cysteine 587, cysteine 629/cysteine 640, cysteine 636/cysteine 649, cysteine 651/cysteine 664, cysteine 669/cysteine 695, cysteine 722/cysteine 744, cysteine 782/cysteine 812, and cysteine 840/cysteine 863. The region spanning 626 to 665 is the EGF-like 2; calcium-binding domain; that stretch reads FDECQNDNAGCEHTCQNRLGSYVCTCNPGYILAEDKHNCK. CUB domains follow at residues 669–781 and 782–900; these read CFFE…YTSL and CGGR…YREA. Asparagine 694 carries an N-linked (GlcNAc...) asparagine glycan. Residues 895 to 928 are disordered; that stretch reads AEYREAPRSSSTKRTFVSKTRHSPLEEPIHDRNE. The segment covering 902-912 has biased composition (polar residues); that stretch reads RSSSTKRTFVS. Positions 917 to 928 are enriched in basic and acidic residues; the sequence is SPLEEPIHDRNE.

Zn(2+) is required as a cofactor. In terms of tissue distribution, expressed in pharyngeal, vulva and body wall muscles, intestine and several neurons.

The protein resides in the secreted. In terms of biological role, metalloprotease. The chain is Zinc metalloproteinase nas-39 from Caenorhabditis elegans.